The sequence spans 273 residues: uncharacterized protein (273 aa).

Position 10–34 (10–34 (VITGAATGIGQATAEVFANEGARVI)) interacts with NAD(+). Ser142 contacts substrate. Tyr155 functions as the Proton acceptor in the catalytic mechanism.

It belongs to the short-chain dehydrogenases/reductases (SDR) family.

This is an uncharacterized protein from Bacillus subtilis (strain 168).